A 146-amino-acid chain; its full sequence is uncharacterized protein (146 aa).

Helical transmembrane passes span 89-111 (AIEM…LLLY) and 121-143 (IGCG…YSVV).

The protein resides in the cell membrane. This is an uncharacterized protein from Archaeoglobus fulgidus (strain ATCC 49558 / DSM 4304 / JCM 9628 / NBRC 100126 / VC-16).